Here is a 443-residue protein sequence, read N- to C-terminus: Autophagy-related protein 13 homolog (443 aa).

Disordered regions lie at residues 232–283 (AKKR…EEDH) and 308–333 (ANGTKKNSSSTCLNSPKSTPEDKEPT). Positions 240 to 253 (SVESATSAGSSTSR) are enriched in polar residues. The segment covering 268–283 (EDSRHSDVQNSYEEDH) has biased composition (basic and acidic residues). The segment covering 308 to 325 (ANGTKKNSSSTCLNSPKS) has biased composition (polar residues).

Belongs to the ATG13 family. Metazoan subfamily. Interacts with unc-51 (via C-terminus). Interacts with lgg-1; the interaction is direct.

The protein localises to the cytoplasm. Its subcellular location is the cytosol. It is found in the preautophagosomal structure. It localises to the perikaryon. The protein resides in the cell projection. The protein localises to the axon. In terms of biological role, component of the unc-51/atg-13 complex required for autophagosome formation. Required for the degradation of germ cell specific P-granule components such as sepa-1 by autophagy in somatic cells. This ensures exclusive localization of the P-granules in germ cells. May function downstream of the let-363 (Tor) signaling pathway to mediate sepa-1 degradation. Plays a role in survival during limited food availability. The polypeptide is Autophagy-related protein 13 homolog (Caenorhabditis elegans).